The primary structure comprises 587 residues: 5-aminolevulinate synthase, erythroid-specific, mitochondrial (587 aa).

The N-terminal 49 residues, 1–49, are a transit peptide targeting the mitochondrion; the sequence is MVTAAMLLQCCPVLARGPTSLLGKVVKTHQFLFGIGRCPILATQGPNCS. Residue Arg-163 coordinates succinyl-CoA. Residues Cys-258 and Phe-259 each contribute to the pyridoxal 5'-phosphate site. Residues Ser-280 and Lys-299 each coordinate succinyl-CoA. The pyridoxal 5'-phosphate site is built by Ser-332, His-360, and Thr-388. Lys-391 is a catalytic residue. Lys-391 is subject to N6-(pyridoxal phosphate)lysine. Residues Thr-420 and Thr-421 each coordinate pyridoxal 5'-phosphate. Thr-508 is a succinyl-CoA binding site.

The protein belongs to the class-II pyridoxal-phosphate-dependent aminotransferase family. As to quaternary structure, homodimer. Interacts with SUCLA2. In terms of assembly, interacts with SUCLA2. Requires pyridoxal 5'-phosphate as cofactor. As to expression, erythroid-specific.

It localises to the mitochondrion inner membrane. The catalysed reaction is succinyl-CoA + glycine + H(+) = 5-aminolevulinate + CO2 + CoA. It functions in the pathway porphyrin-containing compound metabolism; protoporphyrin-IX biosynthesis; 5-aminolevulinate from glycine: step 1/1. Down-regulated by itaconyl-CoA which acts as a competitive inhibitor of succinyl-CoA substrate. Functionally, catalyzes the pyridoxal 5'-phosphate (PLP)-dependent condensation of succinyl-CoA and glycine to form aminolevulinic acid (ALA), with CoA and CO2 as by-products. Contributes significantly to heme formation during erythropoiesis. Its function is as follows. Catalyzes the pyridoxal 5'-phosphate (PLP)-dependent condensation of succinyl-CoA and glycine to form aminolevulinic acid (ALA), with CoA and CO2 as by-products. Catalytic activity is 75-85% of isoform 1 activity. Catalyzes the pyridoxal 5'-phosphate (PLP)-dependent condensation of succinyl-CoA and glycine to form aminolevulinic acid (ALA), with CoA and CO2 as by-products. Catalytic activity is 65-75% of isoform 1 activity. The chain is 5-aminolevulinate synthase, erythroid-specific, mitochondrial from Homo sapiens (Human).